A 743-amino-acid polypeptide reads, in one-letter code: Phosphoribosylformylglycinamidine synthase subunit PurL (743 aa).

H50 is a catalytic residue. Residues Y53 and K92 each contribute to the ATP site. E94 contributes to the Mg(2+) binding site. Substrate is bound by residues 95–98 (SHNH) and R117. Catalysis depends on H96, which acts as the Proton acceptor. D118 contacts Mg(2+). Substrate is bound at residue Q241. Residue D269 participates in Mg(2+) binding. 313–315 (ESQ) lines the substrate pocket. Residues D494 and G531 each coordinate ATP. Mg(2+) is bound at residue N532. Substrate is bound at residue S534.

It belongs to the FGAMS family. Monomer. Part of the FGAM synthase complex composed of 1 PurL, 1 PurQ and 2 PurS subunits.

The protein localises to the cytoplasm. It catalyses the reaction N(2)-formyl-N(1)-(5-phospho-beta-D-ribosyl)glycinamide + L-glutamine + ATP + H2O = 2-formamido-N(1)-(5-O-phospho-beta-D-ribosyl)acetamidine + L-glutamate + ADP + phosphate + H(+). It participates in purine metabolism; IMP biosynthesis via de novo pathway; 5-amino-1-(5-phospho-D-ribosyl)imidazole from N(2)-formyl-N(1)-(5-phospho-D-ribosyl)glycinamide: step 1/2. Its function is as follows. Part of the phosphoribosylformylglycinamidine synthase complex involved in the purines biosynthetic pathway. Catalyzes the ATP-dependent conversion of formylglycinamide ribonucleotide (FGAR) and glutamine to yield formylglycinamidine ribonucleotide (FGAM) and glutamate. The FGAM synthase complex is composed of three subunits. PurQ produces an ammonia molecule by converting glutamine to glutamate. PurL transfers the ammonia molecule to FGAR to form FGAM in an ATP-dependent manner. PurS interacts with PurQ and PurL and is thought to assist in the transfer of the ammonia molecule from PurQ to PurL. This is Phosphoribosylformylglycinamidine synthase subunit PurL from Sinorhizobium medicae (strain WSM419) (Ensifer medicae).